The sequence spans 193 residues: MSLLSVIFIALGLSADCFAVSIGIACTHASIKSRVIWRVAGTFGLFQAGMVVIGFFAGLSVIDIISAFDHWIAFGLLLFIGVRMIYEALQGEDDQELVKLDLTRGLGLLGVAVATSIDALAVGLAFAVEETNIGLAALLIGLVSLTVSFLGFKLGNRISFMASRWVGVAGGLVLVFIGLKILAEHTLGWDILL.

6 helical membrane passes run 6–26 (VIFIALGLSADCFAVSIGIAC), 48–68 (AGMVVIGFFAGLSVIDIISAF), 71–91 (WIAFGLLLFIGVRMIYEALQG), 108–128 (LLGVAVATSIDALAVGLAFAV), 132–152 (NIGLAALLIGLVSLTVSFLGF), and 165–185 (WVGVAGGLVLVFIGLKILAEH).

Belongs to the MntP (TC 9.B.29) family.

The protein resides in the cell membrane. In terms of biological role, probably functions as a manganese efflux pump. This is Putative manganese efflux pump MntP from Dehalococcoides mccartyi (strain ATCC BAA-2100 / JCM 16839 / KCTC 5957 / BAV1).